The chain runs to 345 residues: OVARIAN TUMOR DOMAIN-containing deubiquitinating enzyme 9 (345 aa).

An OTU domain is found at 204-328 (LVENKIEGDG…EVHYNSIYPE (125 aa)). D212 is an active-site residue. C215 serves as the catalytic Nucleophile. Residue H321 is part of the active site.

Belongs to the peptidase C85 family.

The catalysed reaction is Thiol-dependent hydrolysis of ester, thioester, amide, peptide and isopeptide bonds formed by the C-terminal Gly of ubiquitin (a 76-residue protein attached to proteins as an intracellular targeting signal).. Hydrolase that can remove conjugated ubiquitin from proteins in vitro and may therefore play an important regulatory role at the level of protein turnover by preventing degradation. Cysteine protease with a preference for 'Lys-63' and 'Lys-48' -linked ubiquitin (UB) tetramers as substrates. Also cleaves RUB-GST fusion. The protein is OVARIAN TUMOR DOMAIN-containing deubiquitinating enzyme 9 of Arabidopsis thaliana (Mouse-ear cress).